Reading from the N-terminus, the 208-residue chain is 3-demethoxyubiquinol 3-hydroxylase (208 aa).

Fe cation is bound by residues Glu-57, Glu-87, His-90, Glu-139, Glu-171, and His-174.

The protein belongs to the COQ7 family. It depends on Fe cation as a cofactor.

The protein resides in the cell membrane. The enzyme catalyses a 5-methoxy-2-methyl-3-(all-trans-polyprenyl)benzene-1,4-diol + AH2 + O2 = a 3-demethylubiquinol + A + H2O. It participates in cofactor biosynthesis; ubiquinone biosynthesis. Functionally, catalyzes the hydroxylation of 2-nonaprenyl-3-methyl-6-methoxy-1,4-benzoquinol during ubiquinone biosynthesis. The protein is 3-demethoxyubiquinol 3-hydroxylase of Burkholderia cenocepacia (strain HI2424).